The following is a 224-amino-acid chain: 2-C-methyl-D-erythritol 4-phosphate cytidylyltransferase (224 aa).

Belongs to the IspD/TarI cytidylyltransferase family. IspD subfamily.

The enzyme catalyses 2-C-methyl-D-erythritol 4-phosphate + CTP + H(+) = 4-CDP-2-C-methyl-D-erythritol + diphosphate. It functions in the pathway isoprenoid biosynthesis; isopentenyl diphosphate biosynthesis via DXP pathway; isopentenyl diphosphate from 1-deoxy-D-xylulose 5-phosphate: step 2/6. Functionally, catalyzes the formation of 4-diphosphocytidyl-2-C-methyl-D-erythritol from CTP and 2-C-methyl-D-erythritol 4-phosphate (MEP). In Saccharopolyspora erythraea (strain ATCC 11635 / DSM 40517 / JCM 4748 / NBRC 13426 / NCIMB 8594 / NRRL 2338), this protein is 2-C-methyl-D-erythritol 4-phosphate cytidylyltransferase.